Here is a 657-residue protein sequence, read N- to C-terminus: Splicing factor Cactin (657 aa).

Basic residues predominate over residues 1-15 (MGKDSKKHKKERRRE). Disordered regions lie at residues 1–83 (MGKD…EDTL), 369–406 (QESE…ISKK), and 472–503 (ADVD…QGAS). Coiled-coil stretches lie at residues 23 to 77 (SDEE…RKDA) and 352 to 403 (RLQL…DEKI). A compositionally biased stretch (basic and acidic residues) spans 26–60 (ERLQKRLAEQRSLKKDEKRRQKEEMKKNESAEEKR). The span at 61 to 72 (ARRMEKKMRKDA) shows a compositional bias: basic residues. The segment covering 389 to 401 (EEEEEEEEDEDDE) has biased composition (acidic residues). The segment covering 489–503 (PSSSAASSGAPQGAS) has biased composition (low complexity).

This sequence belongs to the CACTIN family. In terms of tissue distribution, expressed in pharynx, intestine, vulva and spermatheca (at protein level).

It localises to the nucleus. It is found in the cytoplasm. Functionally, plays a role in pre-mRNA splicing by facilitating excision of a subset of introns. Plays a role during early embryonic development. Required for the distal tip cell migration at the end of larval development and for gonad morphogenesis. The polypeptide is Splicing factor Cactin (cacn-1) (Caenorhabditis elegans).